The primary structure comprises 283 residues: Pantothenate synthetase (283 aa).

An ATP-binding site is contributed by 31 to 38 (MGALHDGH). His-38 functions as the Proton donor in the catalytic mechanism. Gln-62 is a binding site for (R)-pantoate. Residue Gln-62 participates in beta-alanine binding. 148-151 (GKKD) is a binding site for ATP. Gln-154 contributes to the (R)-pantoate binding site. ATP contacts are provided by residues Ile-177 and 185-188 (KSSR).

The protein belongs to the pantothenate synthetase family. Homodimer.

The protein resides in the cytoplasm. It carries out the reaction (R)-pantoate + beta-alanine + ATP = (R)-pantothenate + AMP + diphosphate + H(+). The protein operates within cofactor biosynthesis; (R)-pantothenate biosynthesis; (R)-pantothenate from (R)-pantoate and beta-alanine: step 1/1. Catalyzes the condensation of pantoate with beta-alanine in an ATP-dependent reaction via a pantoyl-adenylate intermediate. This Oceanobacillus iheyensis (strain DSM 14371 / CIP 107618 / JCM 11309 / KCTC 3954 / HTE831) protein is Pantothenate synthetase.